Here is a 477-residue protein sequence, read N- to C-terminus: MTSKFLLVSFILAALSLSTTFSLQPDQQKVLLVSFDGFRWDYLYKVPTPHFHYIMKYGVHVKQVTNVFITKTYPNHYTLVTGLFAENHGIVANDMFDPIRNKSFSLDHMNIYDSKFWEEATPIWITNQRAGHTSGAAMWPGTDVKIHKRFPTHYMPYNESVSFEDRVAKIIEWFTSKEPINLGLLYWEDPDDMGHHLGPDSPLMGPVISDIDKKLGYLIQMLKKAKLWNTLNLIITSDHGMTQCSEERLIELDQYLDKDHYTLIDQSPVAAILPKEGKFDEVYEALTHAHPNLTVYKKEDVPERWHYKYNSRIQPIIAVADEGWHILQNKSDDFLLGNHGYDNALADMHPIFLAHGPAFRKNFSKEAMNSTDLYPLLCHLLNITAMPHNGSFWNVQDLLNSAMPRVVPYTQSTILLPGSVKPAEYDQEGSYPYFIGVSLGSIIVIVFFVIFIKHLIHSQIPALQDMHAEIAQPLLQA.

An N-terminal signal peptide occupies residues 1–24 (MTSKFLLVSFILAALSLSTTFSLQ). Zn(2+) is bound by residues Asp36 and Thr72. Residue Thr72 is the Nucleophile of the active site. 2 N-linked (GlcNAc...) asparagine glycosylation sites follow: Asn101 and Asn158. Zn(2+)-binding residues include Asp191, His195, Asp238, and His239. 2 N-linked (GlcNAc...) asparagine glycosylation sites follow: Asn292 and Asn329. Residue His339 participates in Zn(2+) binding. Residues Asn362, Asn369, Asn382, and Asn389 are each glycosylated (N-linked (GlcNAc...) asparagine). The helical transmembrane segment at 432 to 452 (PYFIGVSLGSIIVIVFFVIFI) threads the bilayer.

It belongs to the nucleotide pyrophosphatase/phosphodiesterase family. Requires Zn(2+) as cofactor. In terms of processing, N-glycosylated.

Its subcellular location is the secreted. The protein resides in the membrane. Can hydrolyze NAD but cannot hydrolyze nucleotide di- and triphosphates. Lacks lysopholipase D activity. May play a role in neuronal cell communication. The chain is Ectonucleotide pyrophosphatase/phosphodiesterase family member 5 from Homo sapiens (Human).